Consider the following 193-residue polypeptide: Cerebellin-1 (193 aa).

Positions 1–21 (MLGVVELLLLGAAWLAGPARG) are cleaved as a signal peptide. Residue Asn23 is glycosylated (N-linked (GlcNAc...) asparagine). The essential for interaction with NRXN1 and linker of two C1q trimers into disulfide-linked hexamers stretch occupies residues 34 to 38 (CLVVC). Residues 57 to 193 (SGSAKVAFSA…TFSGFLVFPL (137 aa)) enclose the C1q domain. The interval 62–193 (VAFSAIRSTN…TFSGFLVFPL (132 aa)) is necessary for interaction with CBLN3, and homotrimerization. Asn79 is a glycosylation site (N-linked (GlcNAc...) asparagine). The tract at residues 122-147 (YNRQTIQVSLMLNGWPVISAFAGDQD) is essential for interaction with GRID2.

Homohexamer; disulfide-linked homotrimers. The trimers are assembled via the globular C1q domains. The trimers associate via N-terminal cysteine residues to form disulfide-linked hexamers. May form oligomers with CBLN2, CBLN3 and CBLN4 prior to secretion. Once secreted, does not interact with other CBLN family members. Interacts with GRID1. Interacts with NRXN1 and NRXN2 long (alpha) and short (beta) isoforms produced by alternative promoter usage. Competes with NLGN1 for NRXN1-binding. Weakly interacts with NRXN3 short isoform and not at all with NRXN3 long isoform. Interacts (via C1q domain) with GRID2; GRID2-binding is calcium-independent; CBLN1 hexamers anchor GRID2 N-terminal domain dimers to monomeric NRXN1 isoform beta; promotes synaptogenesis and mediates the D-Serine-dependent long term depression signals and AMPA receptor endocytosis. In terms of processing, the proteolytic processing to yield cerebellin seems to occur either prior to the secretion by presynaptic neurons and subsequent oligomerization or in some other location after release of the mature protein. Sialoglycoprotein.

Its subcellular location is the secreted. It is found in the postsynaptic cell membrane. Functionally, required for synapse integrity and synaptic plasticity. During cerebellar synapse formation, essential for the matching and maintenance of pre- and post-synaptic elements at parallel fiber-Purkinje cell synapses, the establishment of the proper pattern of climbing fiber-Purkinje cell innervation, and induction of long-term depression at parallel fiber-Purkinje cell synapses. Plays a role as a synaptic organizer that acts bidirectionally on both pre- and post-synaptic components. On the one hand induces accumulation of synaptic vesicles in the pre-synaptic part by binding with NRXN1 and in other hand induces clustering of GRID2 and its associated proteins at the post-synaptic site through association of GRID2. NRXN1-CBLN1-GRID2 complex directly induces parallel fiber protrusions that encapsulate spines of Purkinje cells leading to accumulation of GRID2 and synaptic vesicles. Required for CBLN3 export from the endoplasmic reticulum and secretion. NRXN1-CBLN1-GRID2 complex mediates the D-Serine-dependent long term depression signals and AMPA receptor endocytosis. Essential for long-term maintenance but not establishment of excitatory synapses. Inhibits the formation and function of inhibitory GABAergic synapses in cerebellar Purkinje cells. In terms of biological role, the cerebellin peptide exerts neuromodulatory functions. Directly stimulates norepinephrine release via the adenylate cyclase/PKA-dependent signaling pathway; and indirectly enhances adrenocortical secretion in vivo, through a paracrine mechanism involving medullary catecholamine release. The polypeptide is Cerebellin-1 (Bos taurus (Bovine)).